The chain runs to 455 residues: Asparagine--tRNA ligase (455 aa).

The protein belongs to the class-II aminoacyl-tRNA synthetase family. In terms of assembly, homodimer.

It is found in the cytoplasm. The enzyme catalyses tRNA(Asn) + L-asparagine + ATP = L-asparaginyl-tRNA(Asn) + AMP + diphosphate + H(+). The polypeptide is Asparagine--tRNA ligase (Lawsonia intracellularis (strain PHE/MN1-00)).